The primary structure comprises 494 residues: DDB1- and CUL4-associated factor 4 (494 aa).

The disordered stretch occupies residues 1–65; the sequence is MHQSSWKSRR…AGSSSVPDLP (65 aa). Basic residues predominate over residues 7–20; that stretch reads KSRRHRRRGHRHSA. The segment covering 51 to 60 has biased composition (low complexity); it reads STSSTAGSSS. WD repeat units follow at residues 367–406 and 409–450; these read FHDS…CIRQ and GHVN…LLRT.

In terms of assembly, interacts with DDB1 and CUL4A.

It participates in protein modification; protein ubiquitination. Its function is as follows. May function as a substrate receptor for CUL4-DDB1 E3 ubiquitin-protein ligase complex. This is DDB1- and CUL4-associated factor 4 (DCAF4) from Bos taurus (Bovine).